A 306-amino-acid chain; its full sequence is UDP-N-acetylenolpyruvoylglucosamine reductase (306 aa).

An FAD-binding PCMH-type domain is found at arginine 34 to alanine 199. The active site involves arginine 179. The Proton donor role is filled by serine 228. Residue glutamate 298 is part of the active site.

This sequence belongs to the MurB family. FAD serves as cofactor.

Its subcellular location is the cytoplasm. It catalyses the reaction UDP-N-acetyl-alpha-D-muramate + NADP(+) = UDP-N-acetyl-3-O-(1-carboxyvinyl)-alpha-D-glucosamine + NADPH + H(+). It functions in the pathway cell wall biogenesis; peptidoglycan biosynthesis. Its function is as follows. Cell wall formation. The chain is UDP-N-acetylenolpyruvoylglucosamine reductase from Rhodopseudomonas palustris (strain BisA53).